A 420-amino-acid polypeptide reads, in one-letter code: Fasciclin-like arabinogalactan protein 8 (420 aa).

Residues 1 to 25 (MAASQTFSLLAFTFSLLAFASTVSS) form the signal peptide. FAS1 domains are found at residues 26–172 (HNIT…DAPI) and 186–326 (SLSN…DNVL). 5 N-linked (GlcNAc...) asparagine glycosylation sites follow: Asn27, Asn128, Asn162, Asn189, and Asn273. Residues 335-394 (SKSPSPAPAPEPVTAPTPSPADAPSPTAASPPAPPTDESPESAPSDSPTGSANSKSANAA) form a disordered region. Over residues 339-371 (SPAPAPEPVTAPTPSPADAPSPTAASPPAPPTD) the composition is skewed to pro residues. The GPI-anchor amidated asparagine moiety is linked to residue Asn392. The propeptide at 393–420 (AAVGVSTPSLFTALVTIAAIAVSVSLCS) is removed in mature form.

Belongs to the fasciclin-like AGP family. In terms of tissue distribution, expressed mainly in flowers and to a lesser extent in leaves and roots.

The protein resides in the cell membrane. May be a cell surface adhesion protein. This chain is Fasciclin-like arabinogalactan protein 8 (FLA8), found in Arabidopsis thaliana (Mouse-ear cress).